Here is a 227-residue protein sequence, read N- to C-terminus: Leucyl/phenylalanyl-tRNA--protein transferase (227 aa).

Belongs to the L/F-transferase family.

The protein resides in the cytoplasm. The catalysed reaction is N-terminal L-lysyl-[protein] + L-leucyl-tRNA(Leu) = N-terminal L-leucyl-L-lysyl-[protein] + tRNA(Leu) + H(+). The enzyme catalyses N-terminal L-arginyl-[protein] + L-leucyl-tRNA(Leu) = N-terminal L-leucyl-L-arginyl-[protein] + tRNA(Leu) + H(+). It carries out the reaction L-phenylalanyl-tRNA(Phe) + an N-terminal L-alpha-aminoacyl-[protein] = an N-terminal L-phenylalanyl-L-alpha-aminoacyl-[protein] + tRNA(Phe). In terms of biological role, functions in the N-end rule pathway of protein degradation where it conjugates Leu, Phe and, less efficiently, Met from aminoacyl-tRNAs to the N-termini of proteins containing an N-terminal arginine or lysine. This is Leucyl/phenylalanyl-tRNA--protein transferase from Afipia carboxidovorans (strain ATCC 49405 / DSM 1227 / KCTC 32145 / OM5) (Oligotropha carboxidovorans).